The primary structure comprises 359 residues: MDKPHTQIMSIWLIVSTLLLLLMIVVGGITRLTNAGLSIVEWNPVSGIIPPISSEDWNNEFNKYTASPEFKLINNQITISEFKYIFFIEYIHRLLGRITGIIIIIPFLIFCYLKSLTKLQYYRLLLITCLVVIQGFMGWYMVKSGLKETPYINHCRLAGHLLLAVIIYHQLIAELLIIIQPFKCYTLATSKANNSNSTSINVINLKIKLIIFNKIIIFLLYTQIMFGALVAGLDAGLIYNEFPNMGDSLIPIEILNQSIDFTMFDNQVLMQFIHRWFGILISGLIICYAIWLIILNKHALRGMGMVAACLVLVQVTTGIITLLYHVPILAALTHQVGAILILTTFLFIQNIVTNFELLH.

A run of 5 helical transmembrane segments spans residues 8–28 (IMSI…VVGG), 94–114 (LLGR…CYLK), 124–144 (LLLI…MVKS), 159–179 (GHLL…LIII), and 215–235 (IIIF…GLDA). Residue His-274 participates in heme binding. 3 helical membrane-spanning segments follow: residues 276 to 296 (WFGI…IILN), 303 to 323 (MGMV…ITLL), and 328 to 348 (ILAA…FLFI). His-334 is a binding site for heme.

The protein belongs to the COX15/CtaA family. Type 2 subfamily. Interacts with CtaB. Heme b is required as a cofactor.

It localises to the cell membrane. The enzyme catalyses Fe(II)-heme o + 2 A + H2O = Fe(II)-heme a + 2 AH2. It participates in porphyrin-containing compound metabolism; heme A biosynthesis; heme A from heme O: step 1/1. In terms of biological role, catalyzes the conversion of heme O to heme A by two successive hydroxylations of the methyl group at C8. The first hydroxylation forms heme I, the second hydroxylation results in an unstable dihydroxymethyl group, which spontaneously dehydrates, resulting in the formyl group of heme A. In Orientia tsutsugamushi (strain Boryong) (Rickettsia tsutsugamushi), this protein is Heme A synthase.